A 122-amino-acid polypeptide reads, in one-letter code: Large ribosomal subunit protein bL17 (122 aa).

This sequence belongs to the bacterial ribosomal protein bL17 family. Part of the 50S ribosomal subunit. Contacts protein L32.

The chain is Large ribosomal subunit protein bL17 from Staphylococcus aureus (strain Mu3 / ATCC 700698).